The sequence spans 539 residues: ATP synthase subunit beta (539 aa).

Residues 1 to 44 form a disordered region; it reads MAKTPAEKPATAAKKPAAPKAAAAPKAAAAKAPAAAKAPAAKKP. 212–219 contributes to the ATP binding site; that stretch reads GGAGVGKT.

Belongs to the ATPase alpha/beta chains family. In terms of assembly, F-type ATPases have 2 components, CF(1) - the catalytic core - and CF(0) - the membrane proton channel. CF(1) has five subunits: alpha(3), beta(3), gamma(1), delta(1), epsilon(1). CF(0) has three main subunits: a(1), b(2) and c(9-12). The alpha and beta chains form an alternating ring which encloses part of the gamma chain. CF(1) is attached to CF(0) by a central stalk formed by the gamma and epsilon chains, while a peripheral stalk is formed by the delta and b chains.

It is found in the cell inner membrane. The enzyme catalyses ATP + H2O + 4 H(+)(in) = ADP + phosphate + 5 H(+)(out). Its function is as follows. Produces ATP from ADP in the presence of a proton gradient across the membrane. The catalytic sites are hosted primarily by the beta subunits. This Caulobacter vibrioides (strain ATCC 19089 / CIP 103742 / CB 15) (Caulobacter crescentus) protein is ATP synthase subunit beta.